We begin with the raw amino-acid sequence, 260 residues long: Type III pantothenate kinase (260 aa).

6 to 13 (DVGNTNIT) provides a ligand contact to ATP. 107-110 (GADR) is a substrate binding site. Asp-109 functions as the Proton acceptor in the catalytic mechanism. K(+) is bound at residue Asp-129. Thr-132 serves as a coordination point for ATP. Thr-184 serves as a coordination point for substrate.

It belongs to the type III pantothenate kinase family. As to quaternary structure, homodimer. It depends on NH4(+) as a cofactor. Requires K(+) as cofactor.

The protein resides in the cytoplasm. It catalyses the reaction (R)-pantothenate + ATP = (R)-4'-phosphopantothenate + ADP + H(+). Its pathway is cofactor biosynthesis; coenzyme A biosynthesis; CoA from (R)-pantothenate: step 1/5. Its function is as follows. Catalyzes the phosphorylation of pantothenate (Pan), the first step in CoA biosynthesis. This Agathobacter rectalis (strain ATCC 33656 / DSM 3377 / JCM 17463 / KCTC 5835 / VPI 0990) (Eubacterium rectale) protein is Type III pantothenate kinase.